Consider the following 235-residue polypeptide: Urease accessory protein UreF (235 aa).

This sequence belongs to the UreF family. In terms of assembly, ureD, UreF and UreG form a complex that acts as a GTP-hydrolysis-dependent molecular chaperone, activating the urease apoprotein by helping to assemble the nickel containing metallocenter of UreC. The UreE protein probably delivers the nickel.

It is found in the cytoplasm. Required for maturation of urease via the functional incorporation of the urease nickel metallocenter. In Ureaplasma urealyticum serovar 10 (strain ATCC 33699 / Western), this protein is Urease accessory protein UreF.